A 384-amino-acid chain; its full sequence is MADKKSPLIAVSVGEASGDLLGAHLIRAIRKRCPQARFVGIGGELMKAEGFESLYDQERLAVRGFVEVVRRLPEILRIRRGLVRDLLSLKPDVFVGIDAPDFNLGVAERLKRSGIPTVHYVSPSVWAWRRERVGKIVHQVNRVLCLFPMEPQLYLDAGGRAEFVGHPMAQLMPLEDDRETARKTLGVDAGIPVFALLPGSRVSEIDYMAPVFFQTALLLLKRYPAARFLLPAATEATKRRLAEILQRSEFAGLPLTVTDRQSETVCRAADAVLVTSGTATLEVALCKRPMVISYKISPLTYAYVKRKIKVPHVGLPNILLGKEAVPELLQHDAVPEKLAAALADWYEHPDKVAALQQDFRVLHLLLKKDTADLAARAVLEEAGC.

It belongs to the LpxB family.

The enzyme catalyses a lipid X + a UDP-2-N,3-O-bis[(3R)-3-hydroxyacyl]-alpha-D-glucosamine = a lipid A disaccharide + UDP + H(+). It participates in bacterial outer membrane biogenesis; LPS lipid A biosynthesis. Functionally, condensation of UDP-2,3-diacylglucosamine and 2,3-diacylglucosamine-1-phosphate to form lipid A disaccharide, a precursor of lipid A, a phosphorylated glycolipid that anchors the lipopolysaccharide to the outer membrane of the cell. The chain is Lipid-A-disaccharide synthase (lpxB) from Neisseria meningitidis serogroup A / serotype 4A (strain DSM 15465 / Z2491).